A 288-amino-acid polypeptide reads, in one-letter code: MIPLFFIPPFIILFITKGKFRFLTKFELVLACALHYGTFILALPIFFLLYKTKQQPWNILLQTALEPVVLSAYGFTFLTALLATIINAIFGLILAWVLVRYEFPGKKLLDATVDLPFALPTSVGGLTLMTVFNDKGWIKPICSWLNIKIVFNPIGVLLAMIFVSLPFVVRTIQPVLQNMEEDLEEAAWCLGASPWTTFWHILFPPLTPSLLTGTTLGFSRALGEYGSIVLIASNIPMKDLVISVLLFQKLEQYDYKSATIIASFVLIISFTALFFINKIQLWKKTFHK.

8 consecutive transmembrane segments (helical) span residues Ile-2–Phe-22, Leu-28–Leu-48, Phe-77–Val-97, Thr-112–Phe-132, Ile-149–Val-169, Thr-196–Phe-218, Ser-227–Phe-247, and Ser-257–Asn-277. The ABC transmembrane type-1 domain occupies Tyr-73 to Asn-277.

Belongs to the binding-protein-dependent transport system permease family. CysTW subfamily.

It localises to the plastid. The protein localises to the chloroplast membrane. In terms of biological role, part of the ABC transporter complex cysAWTP (TC 3.A.1.6.1) involved in sulfate/thiosulfate import. Probably responsible for the translocation of the substrate across the membrane. The protein is Probable sulfate transport system permease protein cysT (cysT) of Marchantia polymorpha (Common liverwort).